The following is a 312-amino-acid chain: R2-like ligand binding oxidase (312 aa).

The Mn(2+) site is built by glutamate 68, glutamate 101, and histidine 104. Residues 71 to 162 constitute a cross-link (3-(O4'-tyrosyl)-valine (Val-Tyr)); the sequence is VTQDIQPFMA…QAQVRASVTY (92 aa). Residue glutamate 101 coordinates Fe cation. The Fe cation site is built by glutamate 167, glutamate 202, and histidine 205.

The protein belongs to the ribonucleoside diphosphate reductase small chain family. R2-like ligand binding oxidase subfamily. As to quaternary structure, homodimer. Fe cation serves as cofactor. Mn(2+) is required as a cofactor.

Functionally, probable oxidase that might be involved in lipid metabolism. This Mycolicibacterium gilvum (strain PYR-GCK) (Mycobacterium gilvum (strain PYR-GCK)) protein is R2-like ligand binding oxidase.